Reading from the N-terminus, the 808-residue chain is Ribosome biogenesis protein BOP1 homolog (808 aa).

Residues 1 to 56 (MTSPKGKPSPKRSAPAPTTAALTPRTEERTEGATSSASASASSHISSSFDSPRDDT) form a disordered region. Composition is skewed to low complexity over residues 12–24 (RSAP…ALTP) and 33–50 (ATSS…SSFD). WD repeat units lie at residues 430 to 469 (GHTA…LMKR), 640 to 680 (KFSE…RRFK), 682 to 720 (SGGV…KPYK), 724 to 766 (SHRG…DYNK), and 777 to 808 (KHQR…AWTE).

This sequence belongs to the WD repeat BOP1/ERB1 family.

It localises to the nucleus. The protein resides in the nucleolus. Its subcellular location is the nucleoplasm. Functionally, required for maturation of ribosomal RNAs and formation of the large ribosomal subunit. The polypeptide is Ribosome biogenesis protein BOP1 homolog (Leishmania infantum).